We begin with the raw amino-acid sequence, 369 residues long: Transposase for insertion sequence element IS1201 (369 aa).

It belongs to the transposase mutator family.

Required for the transposition of the insertion element. The protein is Transposase for insertion sequence element IS1201 of Lactobacillus helveticus (Lactobacillus suntoryeus).